A 2098-amino-acid polypeptide reads, in one-letter code: MATDDKTSPTLDSANDLPRSPTSPSHLTHFKPLTPDQDEPPFKSAYSSFVNLFRFNKERAEGGQGEQQPLSGSWTSPQLPSRTQSVRSPTPYKKQLNEELQRRSSALDTRRKAEPTFGGHDPRTAVQLRSLSTVLKRLKEIMEGKSQDSDLKQYWMPDSQCKECYDCSEKFTTFRRRHHCRLCGQIFCSRCCNQEIPGKFMGYTGDLRACTYCRKIALSYAHSTDSNSIGEDLNALSDSACSVSVLDPSEPRTPVGSRKASRNIFLEDDLAWQSLIHPDSSNTPLSTRLVSVQEDAGKSPARNRSASITNLSLDRSGSPMVPSYETSVSPQANRTYVRTETTEDERKILLDSVQLKDLWKKICHHSSGMEFQDHRYWLRTHPNCIVGKELVNWLIRNGHIATRAQAIAIGQAMVDGRWLDCVSHHDQLFRDEYALYRPLQSTEFSETPSPDSDSVNSVEGHSEPSWFKDIKFDDSDTEQIAEEGDDNLANSASPSKRTSVSSFQSTVDSDSAASISLNVELDNVNFHIKKPSKYPHVPPHPADQKEYLISDTGGQQLSISDAFIKESLFNRRVEEKSKELPFTPLGWHHNNLELLREENGEKQAMERLLSANHNHMMALLQQLLHSDSLSSSWRDIIVSLVCQVVQTVRPDVKNQDDDMDIRQFVHIKKIPGGKKFDSVVVNGFVCTKNIAHKKMSSCIKNPKILLLKCSIEYLYREETKFTCIDPIVLQEREFLKNYVQRIVDVRPTLVLVEKTVSRIAQDMLLEHGITLVINVKSQVLERISRMTQGDLVMSMDQLLTKPHLGTCHKFYMQIFQLPNEQTKTLMFFEGCPQHLGCTIKLRGGSDYELARVKEILIFMICVAYHSQLEISFLMDEFAMPPTLMQNPSFHSLIEGRGHEGAVQEQYGGGSIPWDPDIPPESLPCDDSSLLELRIVFEKGEQENKNLPQAVASVKHQEHSTTACPAGLPCAFFAPVPESLLPLPVDDQQDALGSEQPETLQQTVVLQDPKSQIRAFRDPLQDDTGLYVTEEVTSSEDKRKTYSLAFKQELKDVILCISPVITFREPFLLTEKGMRCSTRDYFAEQVYWSPLLNKEFKEMENRRKKQLLRDLSGLQGMNGSIQAKSIQVLPSHELVSTRIAEHLGDSQSLGRMLADYRARGGRIQPKNSDPFAHSKDASSTSSGQSGSKNEGDEERGLILSDAVWSTKVDCLNPINHQRLCVLFSSSSAQSSNAPSACVSPWIVTMEFYGKNDLTLGIFLERYCFRPSYQCPSMFCDTPMVHHIRRFVHGQGCVQIILKELDSPVPGYQHTILTYSWCRICKQVTPVVALSNESWSMSFAKYLELRFYGHQYTRRANAEPCGHSIHHDYHQYFSYNQMVASFSYSPIRLLEVCVPLPKIFIKRQAPLKVSLLQDLKDFFQKVSQVYVAIDERLASLKTDTFSKTREEKMEDIFAQKEMEEGEFKNWIEKMQARLMSSSVDTPQQLQSVFESLIAKKQSLCEVLQAWNNRLQDLFQQEKGRKRPSVPPSPGRLRQGEESKISAMDASPRNISPGLQNGEKEDRFLTTLSSQSSTSSTHLQLPTPPEVMSEQSVGGPPELDTASSSEDVFDGHLLGSTDSQVKEKSTMKAIFANLLPGNSYNPIPFPFDPDKHYLMYEHERVPIAVCEKEPSSIIAFALSCKEYRNALEELSKATQWNSAEEGLPTNSTSDSRPKSSSPIRLPEMSGGQTNRTTETEPQPTKKASGMLSFFRGTAGKSPDLSSQKRETLRGADSAYYQVGQTGKEGTENQGVEPQDEVDGGDTQKKQLINPHVELQFSDANAKFYCRLYYAGEFHKMREVILDSSEEDFIRSLSHSSPWQARGGKSGAAFYATEDDRFILKQMPRLEVQSFLDFAPHYFNYITNAVQQKRPTALAKILGVYRIGYKNSQNNTEKKLDLLVMENLFYGRKMAQVFDLKGSLRNRNVKTDTGKESCDVVLLDENLLKMVRDNPLYIRSHSKAVLRTSIHSDSHFLSSHLIIDYSLLVGRDDTSNELVVGIIDYIRTFTWDKKLEMVVKSTGILGGQGKMPTVVSPELYRTRFCEAMDKYFLMVPDHWTGLGLNC.

Residues 1 to 45 (MATDDKTSPTLDSANDLPRSPTSPSHLTHFKPLTPDQDEPPFKSA) are disordered. A2 bears the N-acetylalanine mark. Phosphoserine; by autocatalysis is present on residues S23 and S48. Residues 57–123 (KERAEGGQGE…EPTFGGHDPR (67 aa)) are disordered. Polar residues predominate over residues 66-88 (EQQPLSGSWTSPQLPSRTQSVRS). S88 bears the Phosphoserine mark. The FYVE-type zinc-finger motif lies at 158 to 218 (DSQCKECYDC…ACTYCRKIAL (61 aa)). Positions 164, 167, 180, 183, 188, 191, 210, and 213 each coordinate Zn(2+). The segment at 292–329 (VQEDAGKSPARNRSASITNLSLDRSGSPMVPSYETSVS) is disordered. 3 positions are modified to phosphoserine: S299, S307, and S312. Residues 302-315 (RNRSASITNLSLDR) show a composition bias toward polar residues. S318 carries the phosphoserine; by PKB/AKT1 or PKB/AKT2 modification. S329 bears the Phosphoserine mark. Positions 365–440 (HSSGMEFQDH…DEYALYRPLQ (76 aa)) constitute a DEP domain. A compositionally biased stretch (polar residues) spans 442–459 (TEFSETPSPDSDSVNSVE). The tract at residues 442-469 (TEFSETPSPDSDSVNSVEGHSEPSWFKD) is disordered. Basic and acidic residues predominate over residues 460-469 (GHSEPSWFKD). Phosphoserine is present on S475. The tract at residues 484–505 (GDDNLANSASPSKRTSVSSFQS) is disordered. A compositionally biased stretch (polar residues) spans 488–505 (LANSASPSKRTSVSSFQS). The interval 616–868 (MMALLQQLLH…MICVAYHSQL (253 aa)) is chaperonin-like domain. Disordered regions lie at residues 1161 to 1191 (RIQPKNSDPFAHSKDASSTSSGQSGSKNEGD) and 1512 to 1616 (FQQE…STDS). Residues 1177-1186 (SSTSSGQSGS) show a composition bias toward low complexity. S1522 is subject to Phosphoserine; by autocatalysis. A phosphoserine mark is found at S1544 and S1549. The segment covering 1562–1578 (LTTLSSQSSTSSTHLQL) has biased composition (low complexity). Phosphoserine; by autocatalysis is present on S1669. The tract at residues 1692–1799 (QWNSAEEGLP…PQDEVDGGDT (108 aa)) is disordered. The span at 1704-1714 (STSDSRPKSSS) shows a compositional bias: low complexity. Over residues 1723-1735 (GGQTNRTTETEPQ) the composition is skewed to polar residues. S1754 bears the Phosphoserine mark. Positions 1758 to 2084 (SSQKRETLRG…RFCEAMDKYF (327 aa)) constitute a PIPK domain. The interval 1842-2098 (EEDFIRSLSH…DHWTGLGLNC (257 aa)) is catalytic. 2 positions are modified to phosphoserine; by autocatalysis: S1969 and S2053.

As to quaternary structure, component of the PI(3,5)P2 regulatory complex/PAS complex, at least composed of PIKFYVE, FIG4 and VAC14. VAC14 nucleates the assembly of the complex and serves as a scaffold by pentamerizing into a star-shaped structure, which can bind a single copy each of PIKFYVE and FIG4 and coordinates their activities. Interacts (via chaperonin-like domain) with RABEPK; the interaction recruits RABEPK to the endosomal membrane. Interacts with SPAG9. Interacts with EGFR. In terms of processing, autophosphorylates which inhibits its own phosphatidylinositol 3-phosphate 5-kinase activity, stimulates FIG4 lipid phosphatase activity and down-regulates lipid product formation. Dephosphorylated by FIG4 in the PI(3,5)P2 regulatory complex, at Ser-48, Ser-1669 and Ser-2053. Phosphorylated in response to insulin at Ser-318 in a protein kinase B (PKB)-dependent manner.

The protein localises to the endosome membrane. It localises to the early endosome membrane. It is found in the cytoplasmic vesicle. Its subcellular location is the phagosome membrane. The protein resides in the late endosome membrane. It carries out the reaction a 1,2-diacyl-sn-glycero-3-phospho-(1D-myo-inositol-3-phosphate) + ATP = a 1,2-diacyl-sn-glycero-3-phospho-(1D-myo-inositol-3,5-bisphosphate) + ADP + H(+). The enzyme catalyses a 1,2-diacyl-sn-glycero-3-phospho-(1D-myo-inositol) + ATP = a 1,2-diacyl-sn-glycero-3-phospho-(1D-myo-inositol-5-phosphate) + ADP + H(+). The catalysed reaction is L-seryl-[protein] + ATP = O-phospho-L-seryl-[protein] + ADP + H(+). With respect to regulation, inhibited by apilimod and YM201636. Dual specificity kinase implicated in myriad essential cellular processes such as maintenance of endomembrane homeostasis, and endocytic-vacuolar pathway, lysosomal trafficking, nuclear transport, stress- or hormone-induced signaling and cell cycle progression. The PI(3,5)P2 regulatory complex regulates both the synthesis and turnover of phosphatidylinositol 3,5-bisphosphate (PtdIns(3,5)P2). Sole enzyme to catalyze the phosphorylation of phosphatidylinositol 3-phosphate on the fifth hydroxyl of the myo-inositol ring, to form (PtdIns(3,5)P2). Also catalyzes the phosphorylation of phosphatidylinositol on the fifth hydroxyl of the myo-inositol ring, to form phosphatidylinositol 5-phosphate (PtdIns(5)P). Has serine-protein kinase activity and is able to autophosphorylate and transphosphorylate. Autophosphorylation inhibits its own phosphatidylinositol 3-phosphate 5-kinase activity, stimulates FIG4 lipid phosphatase activity and down-regulates lipid product formation. Involved in key endosome operations such as fission and fusion in the course of endosomal cargo transport. Required for the maturation of early into late endosomes, phagosomes and lysosomes. Regulates vacuole maturation and nutrient recovery following engulfment of macromolecules, initiates the redistribution of accumulated lysosomal contents back into the endosome network. Critical regulator of the morphology, degradative activity, and protein turnover of the endolysosomal system in macrophages and platelets. In neutrophils, critical to perform chemotaxis, generate ROS, and undertake phagosome fusion with lysosomes. Plays a key role in the processing and presentation of antigens by major histocompatibility complex class II (MHC class II) mediated by CTSS. Regulates melanosome biogenesis by controlling the delivery of proteins from the endosomal compartment to the melanosome. Essential for systemic glucose homeostasis, mediates insulin-induced signals for endosome/actin remodeling in the course of GLUT4 translocation/glucose uptake activation. Supports microtubule-based endosome-to-trans-Golgi network cargo transport, through association with SPAG9 and RABEPK. Mediates EGFR trafficking to the nucleus. In terms of biological role, (Microbial infection) Required for cell entry of coronaviruses SARS-CoV and SARS-CoV-2, as well as human coronavirus EMC (HCoV-EMC) by endocytosis. This is 1-phosphatidylinositol 3-phosphate 5-kinase from Homo sapiens (Human).